Reading from the N-terminus, the 602-residue chain is NAD-dependent protein deacetylase sir-2.1 (602 aa).

The segment at 25–57 (PEIETMHIENSVEGESGRQRTESTASVNSESWQ) is disordered. Positions 46 to 57 (ESTASVNSESWQ) are enriched in polar residues. The 256-residue stretch at 119–374 (KLFTYNSLSD…RDICYALGGS (256 aa)) folds into the Deacetylase sirtuin-type domain. NAD(+) contacts are provided by residues 144 to 163 (GAGV…DGIY) and 228 to 231 (QNID). The active-site Proton acceptor is His246. Zn(2+) is bound by residues Cys254, Cys257, Cys278, and Cys281. NAD(+) is bound by residues 318-320 (GSS), 343-345 (NRE), and Cys360. Disordered regions lie at residues 411–468 (QERR…SDEV) and 520–551 (RNRH…RSQS).

Belongs to the sirtuin family. Class I subfamily. As to quaternary structure, interacts with ftt-2 and par-5. Interacts with daf-16 following heat-shock, which causes daf-16 to accumulate in the nucleus. Interaction with daf-16 is promoted by ftt-2. The cofactor is Zn(2+).

Its subcellular location is the nucleus. The enzyme catalyses N(6)-acetyl-L-lysyl-[protein] + NAD(+) + H2O = 2''-O-acetyl-ADP-D-ribose + nicotinamide + L-lysyl-[protein]. Its function is as follows. NAD-dependent deacetylase. Required for a reduction of the 'Lys-16' acetylation of histone H4 (H4K16ac) on dosage-compensated X chromosomes in hermaphrodites. Functions upstream of daf-16 in the insulin-like signaling pathway, promoting daf-16 mediated transcriptional activation and increased life-span. May also regulate life-span independently of daf-16 by modulating the transcription of genes involved in the stress response of the endoplasmic reticulum (ER). Acts upstream of the nicotinic acid metabolism pathway, which may be linked to the regulation of longevity. Plays a role in ascaroside-mediated longevity and stress resistance. This Caenorhabditis briggsae protein is NAD-dependent protein deacetylase sir-2.1 (sir-2.1).